Reading from the N-terminus, the 229-residue chain is Potassium/proton antiporter CemA (229 aa).

The next 3 helical transmembrane spans lie at 7 to 27, 114 to 134, and 189 to 209; these read FTPL…SFSF, LICF…LVIL, and ILSG…KYWI.

The protein belongs to the CemA family.

The protein resides in the plastid. The protein localises to the chloroplast inner membrane. It catalyses the reaction K(+)(in) + H(+)(out) = K(+)(out) + H(+)(in). Its function is as follows. Contributes to K(+)/H(+) antiport activity by supporting proton efflux to control proton extrusion and homeostasis in chloroplasts in a light-dependent manner to modulate photosynthesis. Prevents excessive induction of non-photochemical quenching (NPQ) under continuous-light conditions. Indirectly promotes efficient inorganic carbon uptake into chloroplasts. This is Potassium/proton antiporter CemA from Ipomoea purpurea (Common morning glory).